The primary structure comprises 363 residues: 43 kDa protein (363 aa).

In Lepidoptera (butterflies and moths), this protein is 43 kDa protein (P43).